A 320-amino-acid chain; its full sequence is Transaldolase (320 aa).

The active-site Schiff-base intermediate with substrate is the Lys126.

This sequence belongs to the transaldolase family. Type 1 subfamily. As to quaternary structure, homodimer.

It localises to the cytoplasm. The enzyme catalyses D-sedoheptulose 7-phosphate + D-glyceraldehyde 3-phosphate = D-erythrose 4-phosphate + beta-D-fructose 6-phosphate. The protein operates within carbohydrate degradation; pentose phosphate pathway; D-glyceraldehyde 3-phosphate and beta-D-fructose 6-phosphate from D-ribose 5-phosphate and D-xylulose 5-phosphate (non-oxidative stage): step 2/3. In terms of biological role, transaldolase is important for the balance of metabolites in the pentose-phosphate pathway. In Bordetella pertussis (strain Tohama I / ATCC BAA-589 / NCTC 13251), this protein is Transaldolase.